A 390-amino-acid chain; its full sequence is GTPase Obg (390 aa).

Positions 1-159 (MKFVDEATIK…RELRLELLLL (159 aa)) constitute an Obg domain. In terms of domain architecture, OBG-type G spans 160–333 (ADVGMLGLPN…LCDELADFMD (174 aa)). GTP-binding positions include 166–173 (GLPNAGKS), 191–195 (FTTLI), 213–216 (DIPG), 283–286 (NKTD), and 314–316 (AAV). Mg(2+)-binding residues include Ser-173 and Thr-193.

Belongs to the TRAFAC class OBG-HflX-like GTPase superfamily. OBG GTPase family. Monomer. It depends on Mg(2+) as a cofactor.

The protein resides in the cytoplasm. Its function is as follows. An essential GTPase which binds GTP, GDP and possibly (p)ppGpp with moderate affinity, with high nucleotide exchange rates and a fairly low GTP hydrolysis rate. Plays a role in control of the cell cycle, stress response, ribosome biogenesis and in those bacteria that undergo differentiation, in morphogenesis control. The sequence is that of GTPase Obg from Aliivibrio fischeri (strain MJ11) (Vibrio fischeri).